A 1161-amino-acid polypeptide reads, in one-letter code: Hamartin (1161 aa).

A Glycyl lysine isopeptide (Lys-Gly) (interchain with G-Cter in ubiquitin) cross-link involves residue lysine 30. 2 disordered regions span residues proline 296–arginine 336 and cysteine 353–valine 591. Over residues serine 303–arginine 336 the composition is skewed to low complexity. The segment covering threonine 393–proline 402 has biased composition (pro residues). Positions glutamine 403–glutamate 784 are mediates interaction with WDR45B. Residues glutamate 471–serine 484 show a composition bias toward basic and acidic residues. Serine 484, serine 502, serine 508, serine 518, serine 592, and serine 595 each carry phosphoserine. Over residues leucine 509–asparagine 529 the composition is skewed to polar residues. 3 coiled-coil regions span residues isoleucine 721–leucine 849, threonine 879–aspartate 917, and glutamate 967–aspartate 991. Disordered stretches follow at residues glycine 1003 to serine 1077 and asparagine 1092 to serine 1161. The segment covering histidine 1004 to threonine 1017 has biased composition (basic and acidic residues). Residues serine 1026 to serine 1043 are compositionally biased toward low complexity. Residues proline 1064 to serine 1077 show a composition bias toward polar residues. Serine 1094 carries the post-translational modification Phosphoserine. Over residues valine 1103 to threonine 1113 the composition is skewed to low complexity. 2 stretches are compositionally biased toward basic and acidic residues: residues leucine 1114 to threonine 1124 and aspartate 1152 to serine 1161.

Component of the TSC-TBC complex (also named Rhebulator complex), composed of 2 molecules of TSC1, 2 molecules of TSC2 and 1 molecule of TBC1D7. Probably forms a complex composed of chaperones HSP90 and HSP70, co-chaperones STIP1/HOP, CDC37, PPP5C, PTGES3/p23, TSC1 and client protein TSC2. Forms a complex composed of chaperones HSP90 and HSP70, co-chaperones CDC37, PPP5C, TSC1 and client protein TSC2, CDK4, AKT, RAF1 and NR3C1; this complex does not contain co-chaperones STIP1/HOP and PTGES3/p23. Forms a complex containing HSP90AA1, TSC1 and TSC2; TSC1 is required to recruit TCS2 to the complex. Interacts (via C-terminus) with the closed form of HSP90AA1 (via the middle domain and TPR repeat-binding motif). Interacts with DOCK7. Interacts with FBXW5. Interacts with WDR45B. Interacts with RPAP3 and URI1. Phosphorylation at Ser-502 does not affect interaction with TSC2. In terms of processing, 'Lys-63'-linked ubiquitinated at Lys-30 by PELI1; the ubiquitination promotes TSC1/TSC2 complex stability.

Its subcellular location is the lysosome membrane. It localises to the cytoplasm. The protein resides in the cytosol. In terms of biological role, non-catalytic component of the TSC-TBC complex, a multiprotein complex that acts as a negative regulator of the canonical mTORC1 complex, an evolutionarily conserved central nutrient sensor that stimulates anabolic reactions and macromolecule biosynthesis to promote cellular biomass generation and growth. The TSC-TBC complex acts as a GTPase-activating protein (GAP) for the small GTPase RHEB, a direct activator of the protein kinase activity of mTORC1. In absence of nutrients, the TSC-TBC complex inhibits mTORC1, thereby preventing phosphorylation of ribosomal protein S6 kinase (RPS6KB1 and RPS6KB2) and EIF4EBP1 (4E-BP1) by the mTORC1 signaling. The TSC-TBC complex is inactivated in response to nutrients, relieving inhibition of mTORC1. Within the TSC-TBC complex, TSC1 stabilizes TSC2 and prevents TSC2 self-aggregation. Involved in microtubule-mediated protein transport via its ability to regulate mTORC1 signaling. Also acts as a co-chaperone for HSP90AA1 facilitating HSP90AA1 chaperoning of protein clients such as kinases, TSC2 and glucocorticoid receptor NR3C1. Increases ATP binding to HSP90AA1 and inhibits HSP90AA1 ATPase activity. Competes with the activating co-chaperone AHSA1 for binding to HSP90AA1, thereby providing a reciprocal regulatory mechanism for chaperoning of client proteins. Recruits TSC2 to HSP90AA1 and stabilizes TSC2 by preventing the interaction between TSC2 and ubiquitin ligase HERC1. The protein is Hamartin of Mus musculus (Mouse).